The following is a 348-amino-acid chain: Dihydroorotase (348 aa).

Residues His17 and His19 each coordinate Zn(2+). Substrate is bound by residues 19-21 (HLR) and Asn45. Lys103, His140, and His178 together coordinate Zn(2+). An N6-carboxylysine modification is found at Lys103. His140 is a substrate binding site. Residue Leu223 participates in substrate binding. Zn(2+) is bound at residue Asp251. The active site involves Asp251. Positions 255 and 267 each coordinate substrate.

The protein belongs to the metallo-dependent hydrolases superfamily. DHOase family. Class II DHOase subfamily. As to quaternary structure, homodimer. It depends on Zn(2+) as a cofactor.

It catalyses the reaction (S)-dihydroorotate + H2O = N-carbamoyl-L-aspartate + H(+). It participates in pyrimidine metabolism; UMP biosynthesis via de novo pathway; (S)-dihydroorotate from bicarbonate: step 3/3. Its function is as follows. Catalyzes the reversible cyclization of carbamoyl aspartate to dihydroorotate. This Escherichia coli (strain SMS-3-5 / SECEC) protein is Dihydroorotase.